Consider the following 316-residue polypeptide: Small ribosomal subunit biogenesis GTPase RsgA (316 aa).

The tract at residues 1–20 (MSKLSHQQQRRIHNHRQNKL) is disordered. Residues 8-18 (QQRRIHNHRQN) are compositionally biased toward basic residues. The 160-residue stretch at 92–251 (AGKLKPVASN…IIDTPGVRGF (160 aa)) folds into the CP-type G domain. Residues 139 to 142 (NKSD) and 193 to 201 (GQSGVGKSS) contribute to the GTP site. 4 residues coordinate Zn(2+): Cys275, Cys280, His282, and Cys288.

It belongs to the TRAFAC class YlqF/YawG GTPase family. RsgA subfamily. Monomer. Associates with 30S ribosomal subunit, binds 16S rRNA. It depends on Zn(2+) as a cofactor.

The protein localises to the cytoplasm. In terms of biological role, one of several proteins that assist in the late maturation steps of the functional core of the 30S ribosomal subunit. Helps release RbfA from mature subunits. May play a role in the assembly of ribosomal proteins into the subunit. Circularly permuted GTPase that catalyzes slow GTP hydrolysis, GTPase activity is stimulated by the 30S ribosomal subunit. This chain is Small ribosomal subunit biogenesis GTPase RsgA, found in Dichelobacter nodosus (strain VCS1703A).